The following is a 52-amino-acid chain: Large ribosomal subunit protein bL32c (52 aa).

Belongs to the bacterial ribosomal protein bL32 family.

The protein resides in the plastid. The protein localises to the chloroplast. The protein is Large ribosomal subunit protein bL32c of Olimarabidopsis pumila (Dwarf rocket).